A 113-amino-acid chain; its full sequence is Insulin-like peptide 02 (113 aa).

An N-terminal signal peptide occupies residues 1–22 (MFYLTFLLFGAICIGQIQLGQP). The propeptide occupies 23 to 42 (VKFKVNEDGHRPSVYPIKYR). 3 disulfide bridges follow: Cys44-Cys99, Cys56-Cys112, and Cys98-Cys103. A propeptide spans 62–87 (RRKRSIEADIITDKDTANSYFNRVKR) (c peptide).

The protein belongs to the insulin family.

The protein resides in the secreted. Its function is as follows. Insulin decreases blood glucose concentration. May have evolved to activate insulin receptors (INSR) in vertebrates. Molecular docking studies reveals unique interaction with the human insulin receptor. In vivo, insulin-like peptide injection reduces blood glucose levels in two models of zebrafish diabetes (streptozotocin- and glucose-induced). Also shorter swimming distance of zebrafish larvae, an effect which is not observed with human insulin. The chain is Insulin-like peptide 02 from Exaiptasia diaphana (Tropical sea anemone).